The sequence spans 123 residues: UPF0102 protein Fjoh_1217 (123 aa).

It belongs to the UPF0102 family.

In Flavobacterium johnsoniae (strain ATCC 17061 / DSM 2064 / JCM 8514 / BCRC 14874 / CCUG 350202 / NBRC 14942 / NCIMB 11054 / UW101) (Cytophaga johnsonae), this protein is UPF0102 protein Fjoh_1217.